The chain runs to 191 residues: Shikimate kinase (191 aa).

ATP is bound at residue 24–29; it reads GSGKTS. Residue T28 participates in Mg(2+) binding. Substrate contacts are provided by D46, R70, and G92. R130 provides a ligand contact to ATP. Position 149 (R149) interacts with substrate.

The protein belongs to the shikimate kinase family. As to quaternary structure, monomer. The cofactor is Mg(2+).

The protein localises to the cytoplasm. It carries out the reaction shikimate + ATP = 3-phosphoshikimate + ADP + H(+). It functions in the pathway metabolic intermediate biosynthesis; chorismate biosynthesis; chorismate from D-erythrose 4-phosphate and phosphoenolpyruvate: step 5/7. Catalyzes the specific phosphorylation of the 3-hydroxyl group of shikimic acid using ATP as a cosubstrate. This chain is Shikimate kinase, found in Synechococcus sp. (strain CC9902).